The chain runs to 401 residues: Elongation factor Tu (401 aa).

The tr-type G domain maps to 10 to 211; that stretch reads KPHLNVGTIG…ALDTFVPNPK (202 aa). A G1 region spans residues 19 to 26; sequence GHVDHGKT. Residue 19 to 26 coordinates GTP; sequence GHVDHGKT. Threonine 26 is a Mg(2+) binding site. The segment at 62–66 is G2; sequence GITIA. A G3 region spans residues 83–86; sequence DCPG. GTP is bound by residues 83–87 and 138–141; these read DCPGH and NKAD. Residues 138-141 are G4; it reads NKAD. The G5 stretch occupies residues 179-181; the sequence is SAV.

It belongs to the TRAFAC class translation factor GTPase superfamily. Classic translation factor GTPase family. EF-Tu/EF-1A subfamily. Monomer.

It localises to the cytoplasm. It catalyses the reaction GTP + H2O = GDP + phosphate + H(+). Functionally, GTP hydrolase that promotes the GTP-dependent binding of aminoacyl-tRNA to the A-site of ribosomes during protein biosynthesis. The sequence is that of Elongation factor Tu from Leptospira borgpetersenii serovar Hardjo-bovis (strain JB197).